The sequence spans 165 residues: Chorismate pyruvate-lyase (165 aa).

Substrate contacts are provided by M35, R77, L115, and E156.

Belongs to the UbiC family. In terms of assembly, monomer.

The protein localises to the cytoplasm. The enzyme catalyses chorismate = 4-hydroxybenzoate + pyruvate. The protein operates within cofactor biosynthesis; ubiquinone biosynthesis. Functionally, removes the pyruvyl group from chorismate, with concomitant aromatization of the ring, to provide 4-hydroxybenzoate (4HB) for the ubiquinone pathway. In Escherichia coli O17:K52:H18 (strain UMN026 / ExPEC), this protein is Chorismate pyruvate-lyase.